Reading from the N-terminus, the 211-residue chain is Large ribosomal subunit protein uL3 (211 aa).

Residues Asn-122–Pro-157 are disordered.

This sequence belongs to the universal ribosomal protein uL3 family. Part of the 50S ribosomal subunit. Forms a cluster with proteins L14 and L19.

One of the primary rRNA binding proteins, it binds directly near the 3'-end of the 23S rRNA, where it nucleates assembly of the 50S subunit. In Trichormus variabilis (strain ATCC 29413 / PCC 7937) (Anabaena variabilis), this protein is Large ribosomal subunit protein uL3.